The chain runs to 336 residues: Coproporphyrin III ferrochelatase (336 aa).

Fe-coproporphyrin III contacts are provided by serine 52 and tyrosine 116. Positions 176 and 259 each coordinate Fe(2+).

It belongs to the ferrochelatase family.

It is found in the cytoplasm. The enzyme catalyses Fe-coproporphyrin III + 2 H(+) = coproporphyrin III + Fe(2+). Its pathway is porphyrin-containing compound metabolism; protoheme biosynthesis. Its function is as follows. Involved in coproporphyrin-dependent heme b biosynthesis. Catalyzes the insertion of ferrous iron into coproporphyrin III to form Fe-coproporphyrin III. This is Coproporphyrin III ferrochelatase from Mycobacterium leprae (strain Br4923).